The primary structure comprises 1216 residues: DNA-directed RNA polymerase subunit beta (1216 aa).

The disordered stretch occupies residues 1185–1216 (EEKQELPSQEYESLNLDQELKTASENVSESEF). The segment covering 1190–1216 (LPSQEYESLNLDQELKTASENVSESEF) has biased composition (polar residues).

The protein belongs to the RNA polymerase beta chain family. The RNAP catalytic core consists of 2 alpha, 1 beta, 1 beta' and 1 omega subunit. When a sigma factor is associated with the core the holoenzyme is formed, which can initiate transcription.

It catalyses the reaction RNA(n) + a ribonucleoside 5'-triphosphate = RNA(n+1) + diphosphate. DNA-dependent RNA polymerase catalyzes the transcription of DNA into RNA using the four ribonucleoside triphosphates as substrates. This chain is DNA-directed RNA polymerase subunit beta, found in Mycoplasmopsis pulmonis (strain UAB CTIP) (Mycoplasma pulmonis).